Here is a 456-residue protein sequence, read N- to C-terminus: Methylenetetrahydrofolate--tRNA-(uracil-5-)-methyltransferase TrmFO (456 aa).

9–14 (GGGMAG) lines the FAD pocket.

It belongs to the MnmG family. TrmFO subfamily. FAD is required as a cofactor.

The protein localises to the cytoplasm. The enzyme catalyses uridine(54) in tRNA + (6R)-5,10-methylene-5,6,7,8-tetrahydrofolate + NADH + H(+) = 5-methyluridine(54) in tRNA + (6S)-5,6,7,8-tetrahydrofolate + NAD(+). The catalysed reaction is uridine(54) in tRNA + (6R)-5,10-methylene-5,6,7,8-tetrahydrofolate + NADPH + H(+) = 5-methyluridine(54) in tRNA + (6S)-5,6,7,8-tetrahydrofolate + NADP(+). In terms of biological role, catalyzes the folate-dependent formation of 5-methyl-uridine at position 54 (M-5-U54) in all tRNAs. The sequence is that of Methylenetetrahydrofolate--tRNA-(uracil-5-)-methyltransferase TrmFO from Novosphingobium aromaticivorans (strain ATCC 700278 / DSM 12444 / CCUG 56034 / CIP 105152 / NBRC 16084 / F199).